Consider the following 206-residue polypeptide: Pyridoxal 5'-phosphate synthase subunit PdxT (206 aa).

59-61 (GES) provides a ligand contact to L-glutamine. Catalysis depends on cysteine 91, which acts as the Nucleophile. L-glutamine-binding positions include arginine 123 and 151–152 (IR). Residues histidine 187 and glutamate 189 each act as charge relay system in the active site.

It belongs to the glutaminase PdxT/SNO family. As to quaternary structure, in the presence of PdxS, forms a dodecamer of heterodimers. Only shows activity in the heterodimer.

The enzyme catalyses aldehydo-D-ribose 5-phosphate + D-glyceraldehyde 3-phosphate + L-glutamine = pyridoxal 5'-phosphate + L-glutamate + phosphate + 3 H2O + H(+). The catalysed reaction is L-glutamine + H2O = L-glutamate + NH4(+). The protein operates within cofactor biosynthesis; pyridoxal 5'-phosphate biosynthesis. In terms of biological role, catalyzes the hydrolysis of glutamine to glutamate and ammonia as part of the biosynthesis of pyridoxal 5'-phosphate. The resulting ammonia molecule is channeled to the active site of PdxS. The polypeptide is Pyridoxal 5'-phosphate synthase subunit PdxT (Mycobacterium sp. (strain KMS)).